Reading from the N-terminus, the 156-residue chain is MKLQLIAVGHKMPDWINAGYADYVRRMPGDLQLALTEIKPGHRVAGADGARARQLEAARILAAITPGAVRVVLDERGTQATTRELAGWLENWMGEGLTPAFVIGGADGLDDSVKAGAGKLFGLSRLTLPHALARVILAEQLYRAACIIKGHPYHRD.

S-adenosyl-L-methionine contacts are provided by residues L73, G104, and 123-128 (LSRLTL).

The protein belongs to the RNA methyltransferase RlmH family. As to quaternary structure, homodimer.

The protein localises to the cytoplasm. It catalyses the reaction pseudouridine(1915) in 23S rRNA + S-adenosyl-L-methionine = N(3)-methylpseudouridine(1915) in 23S rRNA + S-adenosyl-L-homocysteine + H(+). In terms of biological role, specifically methylates the pseudouridine at position 1915 (m3Psi1915) in 23S rRNA. The polypeptide is Ribosomal RNA large subunit methyltransferase H (Thiobacillus denitrificans (strain ATCC 25259 / T1)).